Here is a 142-residue protein sequence, read N- to C-terminus: MRHYETMFILKPTLVEEEIKSKIEFYKEVITKHNGVIETSLDMGMRNLAYEIKKHKRGYYYVMYFKAEPSMILELERLYRINEDVLRFIVIKYDSKKEVEAWHALVDRANKKPSHAKEKHEKTEHAHSHHTEEAGSKESHSE.

The disordered stretch occupies residues 110–142 (NKKPSHAKEKHEKTEHAHSHHTEEAGSKESHSE).

Belongs to the bacterial ribosomal protein bS6 family.

In terms of biological role, binds together with bS18 to 16S ribosomal RNA. The polypeptide is Small ribosomal subunit protein bS6 (Helicobacter acinonychis (strain Sheeba)).